We begin with the raw amino-acid sequence, 355 residues long: Guanine nucleotide-binding protein G(o) subunit alpha (355 aa).

Positions 1-17 (MGCASSAEERAAPSAQQ) are enriched in low complexity. Residues 1–24 (MGCASSAEERAAPSAQQADREKLK) are disordered. The N-myristoyl glycine moiety is linked to residue Gly2. Cys3 carries S-palmitoyl cysteine lipidation. The 324-residue stretch at 32–355 (KDIKLLLLGA…ANNLRGCGLY (324 aa)) folds into the G-alpha domain. Residues 35-48 (KLLLLGAGESGKST) form a G1 motif region. GTP contacts are provided by residues 40–47 (GAGESGKS), 176–182 (LRTRVKT), 201–205 (DVGRG), 201–206 (DVGRGQ), 271–274 (NKKD), and Ala327. Positions 47 and 182 each coordinate Mg(2+). The tract at residues 174 to 182 (DILRTRVKT) is G2 motif. The tract at residues 197–206 (FKLFDVGRGQ) is G3 motif. Residues 267-274 (ILFLNKKD) are G4 motif. Positions 326 to 330 (TATDT) are G5 motif.

It belongs to the G-alpha family. G(i/o/t/z) subfamily. In terms of assembly, g proteins are composed of 3 units; alpha, beta and gamma. The alpha chain contains the guanine nucleotide binding site.

In terms of biological role, guanine nucleotide-binding proteins (G proteins) are involved as modulators or transducers in various transmembrane signaling systems. The G(o) protein function is not clear. In Manduca sexta (Tobacco hawkmoth), this protein is Guanine nucleotide-binding protein G(o) subunit alpha.